A 257-amino-acid polypeptide reads, in one-letter code: Acetylglutamate kinase (257 aa).

Substrate is bound by residues 43–44 (GG), R65, and N157. ATP contacts are provided by residues 180–185 (DVSGIL) and 208–210 (IIT).

The protein belongs to the acetylglutamate kinase family. ArgB subfamily. As to quaternary structure, homodimer.

The protein resides in the cytoplasm. The catalysed reaction is N-acetyl-L-glutamate + ATP = N-acetyl-L-glutamyl 5-phosphate + ADP. It participates in amino-acid biosynthesis; L-arginine biosynthesis; N(2)-acetyl-L-ornithine from L-glutamate: step 2/4. In terms of biological role, catalyzes the ATP-dependent phosphorylation of N-acetyl-L-glutamate. This chain is Acetylglutamate kinase, found in Serratia proteamaculans (strain 568).